A 434-amino-acid chain; its full sequence is Ribosomal protein uS12 methylthiotransferase RimO (434 aa).

The MTTase N-terminal domain occupies Met1–Gln107. 6 residues coordinate [4Fe-4S] cluster: Cys5, Cys41, Cys70, Cys145, Cys149, and Cys152. In terms of domain architecture, Radical SAM core spans Thr131 to Leu360. Positions Gln363–Val434 constitute a TRAM domain.

The protein belongs to the methylthiotransferase family. RimO subfamily. It depends on [4Fe-4S] cluster as a cofactor.

Its subcellular location is the cytoplasm. It catalyses the reaction L-aspartate(89)-[ribosomal protein uS12]-hydrogen + (sulfur carrier)-SH + AH2 + 2 S-adenosyl-L-methionine = 3-methylsulfanyl-L-aspartate(89)-[ribosomal protein uS12]-hydrogen + (sulfur carrier)-H + 5'-deoxyadenosine + L-methionine + A + S-adenosyl-L-homocysteine + 2 H(+). Its function is as follows. Catalyzes the methylthiolation of an aspartic acid residue of ribosomal protein uS12. The polypeptide is Ribosomal protein uS12 methylthiotransferase RimO (Prochlorococcus marinus (strain SARG / CCMP1375 / SS120)).